A 321-amino-acid chain; its full sequence is o-succinylbenzoate synthase (321 aa).

K134 serves as the catalytic Proton donor. Mg(2+) contacts are provided by D162, E191, and D214. Residue K236 is the Proton acceptor of the active site.

This sequence belongs to the mandelate racemase/muconate lactonizing enzyme family. MenC type 1 subfamily. A divalent metal cation is required as a cofactor.

The catalysed reaction is (1R,6R)-6-hydroxy-2-succinyl-cyclohexa-2,4-diene-1-carboxylate = 2-succinylbenzoate + H2O. Its pathway is quinol/quinone metabolism; 1,4-dihydroxy-2-naphthoate biosynthesis; 1,4-dihydroxy-2-naphthoate from chorismate: step 4/7. It functions in the pathway quinol/quinone metabolism; menaquinone biosynthesis. Converts 2-succinyl-6-hydroxy-2,4-cyclohexadiene-1-carboxylate (SHCHC) to 2-succinylbenzoate (OSB). The protein is o-succinylbenzoate synthase of Klebsiella pneumoniae (strain 342).